The chain runs to 655 residues: Kelch-like protein 13 (655 aa).

The region spanning 92–161 is the BTB domain; it reads CDVTLMPGDT…IYTAKLSLNM (70 aa). Residues 196 to 297 enclose the BACK domain; the sequence is CVEVGRIANT…TPQELINYVQ (102 aa). Kelch repeat units lie at residues 341–389, 390–441, 442–488, 490–535, 537–587, and 588–636; these read HLVT…VIGN, FLYV…ALKG, YLYA…VYGG, MYIS…TVGE, LYVI…VFEN, and KIYV…TLTV.

As to quaternary structure, component of the BCR(KLHL9-KLHL13) E3 ubiquitin ligase complex, at least composed of CUL3, KLHL9, KLHL13 and RBX1. Interacts with AURKB.

Its pathway is protein modification; protein ubiquitination. Functionally, substrate-specific adapter of a BCR (BTB-CUL3-RBX1) E3 ubiquitin-protein ligase complex required for mitotic progression and cytokinesis. The BCR(KLHL9-KLHL13) E3 ubiquitin ligase complex mediates the ubiquitination of AURKB and controls the dynamic behavior of AURKB on mitotic chromosomes and thereby coordinates faithful mitotic progression and completion of cytokinesis. The sequence is that of Kelch-like protein 13 (KLHL13) from Homo sapiens (Human).